The sequence spans 316 residues: Acetaldehyde dehydrogenase (316 aa).

11 to 14 serves as a coordination point for NAD(+); it reads SGNI. Catalysis depends on C131, which acts as the Acyl-thioester intermediate. Residues 162–170 and N289 each bind NAD(+); that span reads SAGPGTRAN.

It belongs to the acetaldehyde dehydrogenase family. Interacts with MhpE.

It carries out the reaction acetaldehyde + NAD(+) + CoA = acetyl-CoA + NADH + H(+). It functions in the pathway aromatic compound metabolism; 3-phenylpropanoate degradation. Its function is as follows. Catalyzes the conversion of acetaldehyde to acetyl-CoA, using NAD(+) and coenzyme A. Is the final enzyme in the meta-cleavage pathway for the degradation of aromatic compounds. This is Acetaldehyde dehydrogenase from Escherichia coli O81 (strain ED1a).